Here is a 751-residue protein sequence, read N- to C-terminus: Semaphorin-3C (751 aa).

Positions 1 to 20 (MAFRTICVLVGVFICSICVK) are cleaved as a signal peptide. A Sema domain is found at 28–511 (RVYLTFDELR…SNEGVSQVSL (484 aa)). Asn81 is a glycosylation site (N-linked (GlcNAc...) asparagine). An intrachain disulfide couples Cys101 to Cys112. An N-linked (GlcNAc...) asparagine glycan is attached at Asn123. A disulfide bridge connects residues Cys130 and Cys139. N-linked (GlcNAc...) asparagine glycosylation is found at Asn252 and Asn268. 2 disulfide bridges follow: Cys266/Cys378 and Cys290/Cys338. An N-linked (GlcNAc...) asparagine glycan is attached at Asn465. Cys514 and Cys532 form a disulfide bridge. Residues 571 to 655 (AYRNAAEIVQ…TENSFKQTIA (85 aa)) form the Ig-like C2-type domain. N-linked (GlcNAc...) asparagine glycosylation is found at Asn585 and Asn586. A disulfide bond links Cys643 and Cys709. A compositionally biased stretch (basic and acidic residues) spans 712–731 (TRQQHQQGDESQKMRGDYGK). The disordered stretch occupies residues 712–751 (TRQQHQQGDESQKMRGDYGKLKALINSRKSRNRRNQLPES).

Belongs to the semaphorin family. Interacts with PLXND1. Expressed intensely in the heart, skeletal muscle, colon, small intestine, ovary, testis, and prostate. Faint expression ubiquitously among other organs, including brain.

It is found in the secreted. Functionally, binds to plexin family members and plays an important role in the regulation of developmental processes. Required for normal cardiovascular development during embryogenesis. Functions as attractant for growing axons, and thereby plays an important role in axon growth and axon guidance. The sequence is that of Semaphorin-3C (SEMA3C) from Homo sapiens (Human).